We begin with the raw amino-acid sequence, 206 residues long: Glycerol-3-phosphate acyltransferase 1 (206 aa).

5 consecutive transmembrane segments (helical) span residues 14–34 (IALA…GLIL), 67–87 (ATLL…SYFL), 91–111 (AAII…WIGF), 124–144 (LLGV…AVAF), and 148–168 (YSSL…WILG).

This sequence belongs to the PlsY family. In terms of assembly, probably interacts with PlsX.

It is found in the cell inner membrane. The enzyme catalyses an acyl phosphate + sn-glycerol 3-phosphate = a 1-acyl-sn-glycero-3-phosphate + phosphate. The protein operates within lipid metabolism; phospholipid metabolism. Its function is as follows. Catalyzes the transfer of an acyl group from acyl-phosphate (acyl-PO(4)) to glycerol-3-phosphate (G3P) to form lysophosphatidic acid (LPA). This enzyme utilizes acyl-phosphate as fatty acyl donor, but not acyl-CoA or acyl-ACP. This chain is Glycerol-3-phosphate acyltransferase 1, found in Rhizobium johnstonii (strain DSM 114642 / LMG 32736 / 3841) (Rhizobium leguminosarum bv. viciae).